Reading from the N-terminus, the 236-residue chain is Small ribosomal subunit protein eS6 (236 aa).

Phosphoserine occurs at positions 232 and 233.

The protein belongs to the eukaryotic ribosomal protein eS6 family. Post-translationally, phosphorylated.

In Eremothecium gossypii (strain ATCC 10895 / CBS 109.51 / FGSC 9923 / NRRL Y-1056) (Yeast), this protein is Small ribosomal subunit protein eS6 (RPS6).